A 485-amino-acid chain; its full sequence is Adenosylhomocysteinase (485 aa).

Substrate-binding residues include T64, D139, and E205. T206–T208 provides a ligand contact to NAD(+). Substrate-binding residues include K235 and D239. Residues N240, G269–G274, E292, N327, and I348–H350 contribute to the NAD(+) site.

This sequence belongs to the adenosylhomocysteinase family. In terms of assembly, homotetramer. Requires NAD(+) as cofactor.

The catalysed reaction is S-adenosyl-L-homocysteine + H2O = L-homocysteine + adenosine. Its pathway is amino-acid biosynthesis; L-homocysteine biosynthesis; L-homocysteine from S-adenosyl-L-homocysteine: step 1/1. Adenosylhomocysteine is a competitive inhibitor of S-adenosyl-L-methionine-dependent methyl transferase reactions; therefore adenosylhomocysteinase may play a key role in the control of methylations via regulation of the intracellular concentration of adenosylhomocysteine. The sequence is that of Adenosylhomocysteinase (SAHH) from Mesembryanthemum crystallinum (Common ice plant).